The sequence spans 103 residues: Pyrimidine/purine nucleoside phosphorylase (103 aa).

The protein belongs to the nucleoside phosphorylase PpnP family.

It catalyses the reaction a purine D-ribonucleoside + phosphate = a purine nucleobase + alpha-D-ribose 1-phosphate. It carries out the reaction adenosine + phosphate = alpha-D-ribose 1-phosphate + adenine. The catalysed reaction is cytidine + phosphate = cytosine + alpha-D-ribose 1-phosphate. The enzyme catalyses guanosine + phosphate = alpha-D-ribose 1-phosphate + guanine. It catalyses the reaction inosine + phosphate = alpha-D-ribose 1-phosphate + hypoxanthine. It carries out the reaction thymidine + phosphate = 2-deoxy-alpha-D-ribose 1-phosphate + thymine. The catalysed reaction is uridine + phosphate = alpha-D-ribose 1-phosphate + uracil. The enzyme catalyses xanthosine + phosphate = alpha-D-ribose 1-phosphate + xanthine. In terms of biological role, catalyzes the phosphorolysis of diverse nucleosides, yielding D-ribose 1-phosphate and the respective free bases. Can use uridine, adenosine, guanosine, cytidine, thymidine, inosine and xanthosine as substrates. Also catalyzes the reverse reactions. This chain is Pyrimidine/purine nucleoside phosphorylase, found in Citrifermentans bemidjiense (strain ATCC BAA-1014 / DSM 16622 / JCM 12645 / Bem) (Geobacter bemidjiensis).